A 574-amino-acid chain; its full sequence is Proline--tRNA ligase (574 aa).

It belongs to the class-II aminoacyl-tRNA synthetase family. ProS type 1 subfamily. Homodimer.

The protein resides in the cytoplasm. It catalyses the reaction tRNA(Pro) + L-proline + ATP = L-prolyl-tRNA(Pro) + AMP + diphosphate. Catalyzes the attachment of proline to tRNA(Pro) in a two-step reaction: proline is first activated by ATP to form Pro-AMP and then transferred to the acceptor end of tRNA(Pro). As ProRS can inadvertently accommodate and process non-cognate amino acids such as alanine and cysteine, to avoid such errors it has two additional distinct editing activities against alanine. One activity is designated as 'pretransfer' editing and involves the tRNA(Pro)-independent hydrolysis of activated Ala-AMP. The other activity is designated 'posttransfer' editing and involves deacylation of mischarged Ala-tRNA(Pro). The misacylated Cys-tRNA(Pro) is not edited by ProRS. In Aeromonas hydrophila subsp. hydrophila (strain ATCC 7966 / DSM 30187 / BCRC 13018 / CCUG 14551 / JCM 1027 / KCTC 2358 / NCIMB 9240 / NCTC 8049), this protein is Proline--tRNA ligase.